The following is a 474-amino-acid chain: tRNA-2-methylthio-N(6)-dimethylallyladenosine synthase (474 aa).

An MTTase N-terminal domain is found at 3–120; it reads QKLHIKTWGC…LPEMINQIRG (118 aa). Positions 12, 49, 83, 157, 161, and 164 each coordinate [4Fe-4S] cluster. The region spanning 143-375 is the Radical SAM core domain; the sequence is RAEGPTAFVS…QERINQQAAQ (233 aa). The TRAM domain occupies 378–441; it reads RRMLGTEQRV…TNSLRGEVVR (64 aa).

It belongs to the methylthiotransferase family. MiaB subfamily. In terms of assembly, monomer. Requires [4Fe-4S] cluster as cofactor.

It localises to the cytoplasm. The enzyme catalyses N(6)-dimethylallyladenosine(37) in tRNA + (sulfur carrier)-SH + AH2 + 2 S-adenosyl-L-methionine = 2-methylsulfanyl-N(6)-dimethylallyladenosine(37) in tRNA + (sulfur carrier)-H + 5'-deoxyadenosine + L-methionine + A + S-adenosyl-L-homocysteine + 2 H(+). Catalyzes the methylthiolation of N6-(dimethylallyl)adenosine (i(6)A), leading to the formation of 2-methylthio-N6-(dimethylallyl)adenosine (ms(2)i(6)A) at position 37 in tRNAs that read codons beginning with uridine. The chain is tRNA-2-methylthio-N(6)-dimethylallyladenosine synthase from Haemophilus influenzae (strain PittGG).